The following is a 243-amino-acid chain: Glucosamine-6-phosphate deaminase (243 aa).

Aspartate 67 serves as the catalytic Proton acceptor; for enolization step. The For ring-opening step role is filled by asparagine 137. The active-site Proton acceptor; for ring-opening step is the histidine 139. The For ring-opening step role is filled by glutamate 144.

It belongs to the glucosamine/galactosamine-6-phosphate isomerase family. NagB subfamily.

It catalyses the reaction alpha-D-glucosamine 6-phosphate + H2O = beta-D-fructose 6-phosphate + NH4(+). The protein operates within amino-sugar metabolism; N-acetylneuraminate degradation; D-fructose 6-phosphate from N-acetylneuraminate: step 5/5. In terms of biological role, catalyzes the reversible isomerization-deamination of glucosamine 6-phosphate (GlcN6P) to form fructose 6-phosphate (Fru6P) and ammonium ion. This is Glucosamine-6-phosphate deaminase from Staphylococcus epidermidis (strain ATCC 12228 / FDA PCI 1200).